We begin with the raw amino-acid sequence, 347 residues long: 3-isopropylmalate dehydrogenase (347 aa).

Residues R95, R105, R129, and D220 each contribute to the substrate site. Mg(2+) is bound by residues D220, D244, and D248. Position 280 to 292 (280 to 292) interacts with NAD(+); sequence GSAPDIAGQGKAD.

It belongs to the isocitrate and isopropylmalate dehydrogenases family. LeuB type 2 subfamily. As to quaternary structure, homodimer. Requires Mg(2+) as cofactor. Mn(2+) serves as cofactor.

The protein localises to the cytoplasm. The enzyme catalyses (2R,3S)-3-isopropylmalate + NAD(+) = 4-methyl-2-oxopentanoate + CO2 + NADH. It functions in the pathway amino-acid biosynthesis; L-leucine biosynthesis; L-leucine from 3-methyl-2-oxobutanoate: step 3/4. Catalyzes the oxidation of 3-carboxy-2-hydroxy-4-methylpentanoate (3-isopropylmalate) to 3-carboxy-4-methyl-2-oxopentanoate. The product decarboxylates to 4-methyl-2 oxopentanoate. The polypeptide is 3-isopropylmalate dehydrogenase (Beutenbergia cavernae (strain ATCC BAA-8 / DSM 12333 / CCUG 43141 / JCM 11478 / NBRC 16432 / NCIMB 13614 / HKI 0122)).